The sequence spans 399 residues: MFKFSASLAALAALVPFVAAQSPEWGQCGGIGWTGPTTCVAGTTCVESNPYYSQCLPGAASVAPPPPSGTSSAGGSTPSSSAKLHTLAKAAGKLYFGTATDNNELTDTAYTAILDDNTMFGQITPANSMKWDATEPQQGVFTFSGGDQIATLAKTNGMLLRGHNCVWYNQLPSWVSSGSFTAAQLTSIIQNHCSTLVTHYKGQVYAWDVVNEPFNDDGTWRTDVFYNTLGTSYVQIALEAARAADPNAKLYINEYNIEFAGAKATSLLNLVKSLKAADVPLDGIGFQCHLIVGEFSGPGLQTQLSTFAAQGVEVAITELDIRMTLPSTPALLAQQQTDYNSVITACMNVESCIGVTVWDWTDKYSWVPNTFSGQGAACPWDQNFVKKPAFNGIAAGFSA.

The first 20 residues, 1–20 (MFKFSASLAALAALVPFVAA), serve as a signal peptide directing secretion. A CBM1 domain is found at 21-56 (QSPEWGQCGGIGWTGPTTCVAGTTCVESNPYYSQCL). The 316-residue stretch at 81–396 (SAKLHTLAKA…KPAFNGIAAG (316 aa)) folds into the GH10 domain. Glu-212 serves as the catalytic Proton donor. The active-site Nucleophile is the Glu-318. Cys-346 and Cys-352 form a disulfide bridge.

Belongs to the glycosyl hydrolase 10 (cellulase F) family.

Its subcellular location is the secreted. It catalyses the reaction Endohydrolysis of (1-&gt;4)-beta-D-xylosidic linkages in xylans.. It participates in glycan degradation; xylan degradation. Endo-1,4-beta-xylanase involved in the hydrolysis of xylan, a major structural heterogeneous polysaccharide found in plant biomass representing the second most abundant polysaccharide in the biosphere, after cellulose. The chain is Endo-1,4-beta-xylanase C (xynC) from Phanerodontia chrysosporium (White-rot fungus).